A 1714-amino-acid chain; its full sequence is Collagen alpha-1(XXIV) chain (1714 aa).

Residues 1 to 35 (MHLRAHRTRRGKVSPTAKTKSLLHFIVLCVAGVVV) form the signal peptide. A Laminin G-like domain is found at 141–217 (KLVVHIRGKQ…MNNNSIHFEG (77 aa)). 3 N-linked (GlcNAc...) asparagine glycosylation sites follow: Asn155, Asn321, and Asn376. Collagen-like domains lie at 487 to 542 (LRGP…PGFS), 552 to 611 (GDQG…EGNP), 660 to 719 (GPAG…KGEQ), 741 to 797 (GPPG…RGPP), 798 to 857 (GPPG…TGPV), 858 to 887 (GLPG…QGEK), 888 to 947 (GVMG…KGEK), 948 to 1007 (GDQG…PGEM), 1011 to 1052 (GPPG…PGAP), 1053 to 1112 (GEEG…PGQR), 1116 to 1170 (GKKG…GIPG), 1172 to 1196 (RGHQ…PGED), 1201 to 1249 (GPPG…GEPG), 1252 to 1306 (GEQG…GNPG), 1309 to 1353 (GPPG…QGPK), 1354 to 1413 (GEQG…EGDA), and 1420 to 1479 (GPKG…PGPR). Residues 487 to 1481 (LRGPKGDTGP…PPGAPGPRKQ (995 aa)) form a disordered region. The segment covering 496-505 (PPGPPGPAGI) has biased composition (pro residues). 2 stretches are compositionally biased toward low complexity: residues 574-587 (HPGL…QGIP) and 685-701 (SVGP…PGPM). The span at 893 to 902 (PGPPGVPGPI) shows a compositional bias: pro residues. Over residues 985-1019 (DRGLPGEPGLRGLQGDVGPPGEMGMEGPPGTEGES) the composition is skewed to low complexity. Gly residues-rich tracts occupy residues 1035–1044 (GSVGGTGEPG) and 1065–1074 (GVPGGRGLPG). Composition is skewed to low complexity over residues 1132–1145 (SRGP…SGPK) and 1174–1186 (HQGQ…LPGP). The span at 1256 to 1266 (LKGERGSEGNK) shows a compositional bias: basic and acidic residues. The span at 1271–1293 (APGPSGKPGIPGLQGLLGPKGIQ) shows a compositional bias: low complexity. Over residues 1318–1327 (GIRGGPGRTG) the composition is skewed to gly residues. The span at 1466–1476 (QPGPPGPPGAP) shows a compositional bias: pro residues. The Fibrillar collagen NC1 domain occupies 1515 to 1714 (EEIFKTLNYL…YIDSSSVCFL (200 aa)).

The protein belongs to the fibrillar collagen family.

The protein resides in the secreted. It localises to the extracellular space. The protein localises to the extracellular matrix. In terms of biological role, may participate in regulating type I collagen fibrillogenesis at specific anatomical locations during fetal development. This Homo sapiens (Human) protein is Collagen alpha-1(XXIV) chain (COL24A1).